Consider the following 350-residue polypeptide: Histidinol-phosphate aminotransferase 1 (350 aa).

An N6-(pyridoxal phosphate)lysine modification is found at lysine 209.

The protein belongs to the class-II pyridoxal-phosphate-dependent aminotransferase family. Histidinol-phosphate aminotransferase subfamily. As to quaternary structure, homodimer. Pyridoxal 5'-phosphate serves as cofactor.

It catalyses the reaction L-histidinol phosphate + 2-oxoglutarate = 3-(imidazol-4-yl)-2-oxopropyl phosphate + L-glutamate. It functions in the pathway amino-acid biosynthesis; L-histidine biosynthesis; L-histidine from 5-phospho-alpha-D-ribose 1-diphosphate: step 7/9. This Bradyrhizobium diazoefficiens (strain JCM 10833 / BCRC 13528 / IAM 13628 / NBRC 14792 / USDA 110) protein is Histidinol-phosphate aminotransferase 1 (hisC1).